The chain runs to 140 residues: Nucleoside diphosphate kinase (140 aa).

Residues K11, F59, R87, T93, R104, and N114 each contribute to the ATP site. Residue H117 is the Pros-phosphohistidine intermediate of the active site.

The protein belongs to the NDK family. In terms of assembly, homotetramer. Mg(2+) serves as cofactor.

It is found in the cytoplasm. The catalysed reaction is a 2'-deoxyribonucleoside 5'-diphosphate + ATP = a 2'-deoxyribonucleoside 5'-triphosphate + ADP. It carries out the reaction a ribonucleoside 5'-diphosphate + ATP = a ribonucleoside 5'-triphosphate + ADP. In terms of biological role, major role in the synthesis of nucleoside triphosphates other than ATP. The ATP gamma phosphate is transferred to the NDP beta phosphate via a ping-pong mechanism, using a phosphorylated active-site intermediate. The sequence is that of Nucleoside diphosphate kinase from Rhizorhabdus wittichii (strain DSM 6014 / CCUG 31198 / JCM 15750 / NBRC 105917 / EY 4224 / RW1) (Sphingomonas wittichii).